The primary structure comprises 200 residues: ATP-dependent Clp protease proteolytic subunit 2 (200 aa).

Ser-101 acts as the Nucleophile in catalysis. The active site involves His-126.

The protein belongs to the peptidase S14 family. As to quaternary structure, fourteen ClpP subunits assemble into 2 heptameric rings which stack back to back to give a disk-like structure with a central cavity, resembling the structure of eukaryotic proteasomes.

The protein localises to the cytoplasm. It carries out the reaction Hydrolysis of proteins to small peptides in the presence of ATP and magnesium. alpha-casein is the usual test substrate. In the absence of ATP, only oligopeptides shorter than five residues are hydrolyzed (such as succinyl-Leu-Tyr-|-NHMec, and Leu-Tyr-Leu-|-Tyr-Trp, in which cleavage of the -Tyr-|-Leu- and -Tyr-|-Trp bonds also occurs).. Its function is as follows. Cleaves peptides in various proteins in a process that requires ATP hydrolysis. Has a chymotrypsin-like activity. Plays a major role in the degradation of misfolded proteins. The polypeptide is ATP-dependent Clp protease proteolytic subunit 2 (Prochlorococcus marinus (strain NATL2A)).